The primary structure comprises 82 residues: Kappa-actitoxin-Avd4j (82 aa).

The signal sequence occupies residues 1 to 19 (MNKALFLCLVVLCAAVVFA). The propeptide occupies 20–31 (AEDLQKAKHAPF). 3 cysteine pairs are disulfide-bonded: Cys-38–Cys-73, Cys-40–Cys-66, and Cys-56–Cys-74.

It belongs to the sea anemone type 3 (BDS) potassium channel toxin family. As to expression, weakly expressed in the ectodermal tissue from the distal and proximal tentacles, body wall, and oral disk.

Its subcellular location is the secreted. It is found in the nematocyst. Functionally, blocks Kv3 voltage-gated potassium channels. Reduces blood pressure. This chain is Kappa-actitoxin-Avd4j, found in Anemonia viridis (Snakelocks anemone).